Reading from the N-terminus, the 483-residue chain is MTMPVNGAHKDADLWSSHDKMLAQPLKDSDVEVYNIIKKESNRQRVGLELFASENFASQAVLEALGSCLNNKYSEGYPGQRYYGGTEFIDELETLCQKRALQAYKLDPQCWGVNVQPYSGSPANFAVYTALVEPHGRIMGLDLPDGGHLTHGFMTGKKKISATSIFFESMPYKVNPDTGYINYDQLEENARLFHPKLIIAGTSCYSRNLDYARLRKIADENGAYLMADMAHISGLVAAGVVPSPFEHCHVVTTTTHKTLRGCRAGMIFYRKGVQSVDPKTGKEILYNLESLINSAVFPGLQGGPHNHAIAGVAVALKQAMTLEFKVYQHQVVANCRALSEALTELGYKIVTGGSDNHLILVDLRSKGTDGGRAEKVLEACSIACNKNTCPGDRSALRPSGLRLGTPALTSRGLLEKDFQKVAHFIHRGIELTLQIQSDTGVRATLKEFKERLAGDKYQGAVQALREKVESFASLFPLPGLPDF.

Residue K257 is modified to N6-(pyridoxal phosphate)lysine.

Belongs to the SHMT family. In terms of assembly, homotetramer. Identified in complex with ABRAXAS2 and the other subunits of the BRISC complex, at least composed of ABRAXAS2, BRCC3/BRCC36, BABAM2 and BABAM1/NBA1. Pyridoxal 5'-phosphate serves as cofactor.

It localises to the cytoplasm. It carries out the reaction (6R)-5,10-methylene-5,6,7,8-tetrahydrofolate + glycine + H2O = (6S)-5,6,7,8-tetrahydrofolate + L-serine. It participates in one-carbon metabolism; tetrahydrofolate interconversion. Interconversion of serine and glycine. In Pongo abelii (Sumatran orangutan), this protein is Serine hydroxymethyltransferase, cytosolic (SHMT1).